The chain runs to 201 residues: Superoxide dismutase [Mn] (201 aa).

Residues histidine 27, histidine 81, aspartate 163, and histidine 167 each contribute to the Mn(2+) site.

This sequence belongs to the iron/manganese superoxide dismutase family. In terms of assembly, homodimer. It depends on Mn(2+) as a cofactor.

It is found in the secreted. It carries out the reaction 2 superoxide + 2 H(+) = H2O2 + O2. In terms of biological role, destroys superoxide anion radicals which are normally produced within the cells and which are toxic to biological systems. This is Superoxide dismutase [Mn] (sodA) from Streptococcus pyogenes serotype M18 (strain MGAS8232).